The primary structure comprises 185 residues: MLQAIYNETKDLMQKSIQALSRDFSTLRSAKVSVNILDHIKVDYYGTPTALNQVGSVMSLDATTLQISPWEKNLLKEIERSIQEANIGVNPNNDGETIKLFFPPMTTEQRKLIAKDAKAMGEKAKVAVRNTRQDANNKVKKLEKDKEISEDESKKAQEQIQKITDEAIKKIDESVKNKEDAILKV.

The disordered stretch occupies residues 127 to 158 (AVRNTRQDANNKVKKLEKDKEISEDESKKAQE).

It belongs to the RRF family.

The protein localises to the cytoplasm. In terms of biological role, responsible for the release of ribosomes from messenger RNA at the termination of protein biosynthesis. May increase the efficiency of translation by recycling ribosomes from one round of translation to another. The protein is Ribosome-recycling factor of Helicobacter pylori (strain G27).